The chain runs to 222 residues: Putative thymidylate synthase (222 aa).

Cysteine 139 is an active-site residue.

Belongs to the thymidylate synthase family. Archaeal-type ThyA subfamily. As to quaternary structure, monomer.

It is found in the cytoplasm. Its pathway is pyrimidine metabolism; dTTP biosynthesis. Functionally, may catalyze the biosynthesis of dTMP using an unknown cosubstrate. This Methanocaldococcus jannaschii (strain ATCC 43067 / DSM 2661 / JAL-1 / JCM 10045 / NBRC 100440) (Methanococcus jannaschii) protein is Putative thymidylate synthase.